Reading from the N-terminus, the 490-residue chain is Glycogen synthase kinase-3 alpha (490 aa).

Over residues 1–15 (MSGGGPSGGGPGGSG) the composition is skewed to gly residues. The disordered stretch occupies residues 1-97 (MSGGGPSGGG…PPGVKLGRDS (97 aa)). At Ser-2 the chain carries N-acetylserine. The residue at position 2 (Ser-2) is a Phosphoserine. A Phosphoserine; by PKB/AKT1 modification is found at Ser-21. Positions 25 to 82 (PGGGGGGGGGGPGGSASGPGGTGGGKASVGAMGGGVGASSSGGGPSGSGGGGSGGPGA) are enriched in gly residues. Phosphoserine occurs at positions 72, 77, and 97. Residues 119–404 (YTDIKVIGNG…PLEACAHSFF (286 aa)) enclose the Protein kinase domain. ATP is bound by residues 125-133 (IGNGSFGVV) and Lys-148. Asp-244 (proton acceptor) is an active-site residue. Tyr-279 carries the phosphotyrosine modification. The disordered stretch occupies residues 451–490 (GPASPLTTSYNPSSQALTEAQTGQDWQPSDATTATLASSS). Residues 455 to 480 (PLTTSYNPSSQALTEAQTGQDWQPSD) show a composition bias toward polar residues. Over residues 481 to 490 (ATTATLASSS) the composition is skewed to low complexity.

The protein belongs to the protein kinase superfamily. CMGC Ser/Thr protein kinase family. GSK-3 subfamily. As to quaternary structure, monomer. Interacts with AXIN1 and CTNNB1/beta-catenin. Interacts with ARRB2. Interacts with CTNND2. Interacts with LMBR1L. Interacts with DDX3X. Interacts with TNFRSF10B. Phosphorylated by AKT1 at Ser-21: upon insulin-mediated signaling, the activated PKB/AKT1 protein kinase phosphorylates and deactivates GSK3A, resulting in the dephosphorylation and activation of GYS1. Activated by phosphorylation at Tyr-279.

The catalysed reaction is L-seryl-[tau protein] + ATP = O-phospho-L-seryl-[tau protein] + ADP + H(+). The enzyme catalyses L-threonyl-[tau protein] + ATP = O-phospho-L-threonyl-[tau protein] + ADP + H(+). It carries out the reaction L-seryl-[protein] + ATP = O-phospho-L-seryl-[protein] + ADP + H(+). It catalyses the reaction L-threonyl-[protein] + ATP = O-phospho-L-threonyl-[protein] + ADP + H(+). With respect to regulation, activated by phosphorylation at Tyr-279. In response to insulin, inhibited by phosphorylation at Ser-21 by PKB/AKT1; phosphorylation at this site causes a conformational change, preventing access of substrates to the active site. Inhibited by lithium. Functionally, constitutively active protein kinase that acts as a negative regulator in the hormonal control of glucose homeostasis, Wnt signaling and regulation of transcription factors and microtubules, by phosphorylating and inactivating glycogen synthase (GYS1 or GYS2), CTNNB1/beta-catenin, APC and AXIN1. Requires primed phosphorylation of the majority of its substrates. Contributes to insulin regulation of glycogen synthesis by phosphorylating and inhibiting GYS1 activity and hence glycogen synthesis. Regulates glycogen metabolism in liver, but not in muscle. May also mediate the development of insulin resistance by regulating activation of transcription factors. In Wnt signaling, regulates the level and transcriptional activity of nuclear CTNNB1/beta-catenin. Facilitates amyloid precursor protein (APP) processing and the generation of APP-derived amyloid plaques found in Alzheimer disease. May be involved in the regulation of replication in pancreatic beta-cells. Is necessary for the establishment of neuronal polarity and axon outgrowth. Through phosphorylation of the anti-apoptotic protein MCL1, may control cell apoptosis in response to growth factors deprivation. Acts as a regulator of autophagy by mediating phosphorylation of KAT5/TIP60 under starvation conditions, activating KAT5/TIP60 acetyltransferase activity and promoting acetylation of key autophagy regulators, such as ULK1 and RUBCNL/Pacer. Negatively regulates extrinsic apoptotic signaling pathway via death domain receptors. Promotes the formation of an anti-apoptotic complex, made of DDX3X, BRIC2 and GSK3B, at death receptors, including TNFRSF10B. The anti-apoptotic function is most effective with weak apoptotic signals and can be overcome by stronger stimulation. In Mus musculus (Mouse), this protein is Glycogen synthase kinase-3 alpha (Gsk3a).